The sequence spans 147 residues: MKVILLKDVPSLGKADSVVNVANGYAKNFLFKNKLAEPYTERGQKRLDLKVIKRNEQHDLLALEAKNLAKQLEGVVLEYDIRTNEEDKAFGTIGFKQIVDDLSKKHIFVTKDMLDSKMKLDIGEHRVKINIFEGIHATILVKVSKAQ.

The protein belongs to the bacterial ribosomal protein bL9 family.

Its function is as follows. Binds to the 23S rRNA. This Mycoplasmoides gallisepticum (strain R(low / passage 15 / clone 2)) (Mycoplasma gallisepticum) protein is Large ribosomal subunit protein bL9.